Consider the following 61-residue polypeptide: Photosystem II reaction center protein K (61 aa).

Positions 1–24 (MLNIFNLVCICIHSVLYSSSFFSA) are excised as a propeptide. The helical transmembrane segment at 36-56 (IVDIMPVIPLLFFLLAFVWQA) threads the bilayer.

It belongs to the PsbK family. As to quaternary structure, PSII is composed of 1 copy each of membrane proteins PsbA, PsbB, PsbC, PsbD, PsbE, PsbF, PsbH, PsbI, PsbJ, PsbK, PsbL, PsbM, PsbT, PsbX, PsbY, PsbZ, Psb30/Ycf12, at least 3 peripheral proteins of the oxygen-evolving complex and a large number of cofactors. It forms dimeric complexes.

It localises to the plastid. The protein localises to the chloroplast thylakoid membrane. Its function is as follows. One of the components of the core complex of photosystem II (PSII). PSII is a light-driven water:plastoquinone oxidoreductase that uses light energy to abstract electrons from H(2)O, generating O(2) and a proton gradient subsequently used for ATP formation. It consists of a core antenna complex that captures photons, and an electron transfer chain that converts photonic excitation into a charge separation. This Glycine max (Soybean) protein is Photosystem II reaction center protein K.